The sequence spans 176 residues: CASP-like protein 5A1 (176 aa).

Topologically, residues 1–45 (MDASHPAVYPVGVPPTAVDPPPRVRMKDYEGMPSTLGGLVLRSGQ) are cytoplasmic. The chain crosses the membrane as a helical span at residues 46–66 (FACAVTALSIMISIPDFSSVT). Residue Ala-67 is a topological domain, extracellular. Residues 68–88 (FCYLVAAMALQLLWSVSLAVV) traverse the membrane as a helical segment. At 89-102 (DGYALLLRRTLHNP) the chain is on the cytoplasmic side. The helical transmembrane segment at 103-123 (VLLSLLVIGDWVTSTLSLAAA) threads the bilayer. Residues 124 to 151 (CSSAGITVLIDSDLAQCAHNHCGRYEAA) lie on the Extracellular side of the membrane. The helical transmembrane segment at 152–172 (VAMAFLTWFLVSLSFFFSFWL) threads the bilayer. Residues 173 to 176 (LATR) lie on the Cytoplasmic side of the membrane.

It belongs to the Casparian strip membrane proteins (CASP) family. Homodimer and heterodimers.

It localises to the cell membrane. This is CASP-like protein 5A1 from Selaginella moellendorffii (Spikemoss).